The chain runs to 828 residues: Putative alpha-1,3-mannosyltransferase MNN12 (828 aa).

Residues 1–13 (MIEKLTIKRSRQK) are Cytoplasmic-facing. Residues 14–34 (VIAYSVIIIWLMIVNIWLLNN) traverse the membrane as a helical segment. Residues 35–828 (YHLNSSTLTR…YYGDVWVGME (794 aa)) are Lumenal-facing. Residue N38 is glycosylated (N-linked (GlcNAc...) asparagine). Residues 80-104 (HQEEDVPNSQSTDNSLIKPTSPAKN) form a disordered region. The span at 86–103 (PNSQSTDNSLIKPTSPAK) shows a compositional bias: polar residues. N-linked (GlcNAc...) asparagine glycosylation is found at N247, N437, and N591.

It belongs to the MNN1/MNT family.

The protein resides in the golgi apparatus membrane. The protein operates within protein modification; protein glycosylation. Responsible for addition of the terminal mannose residues to the outer chain of core N-linked polysaccharides and to O-linked mannotriose. Implicated in late Golgi modifications. This chain is Putative alpha-1,3-mannosyltransferase MNN12 (MNN12), found in Candida albicans (strain SC5314 / ATCC MYA-2876) (Yeast).